The following is a 234-amino-acid chain: Large ribosomal subunit protein uL1 (234 aa).

Belongs to the universal ribosomal protein uL1 family. As to quaternary structure, part of the 50S ribosomal subunit.

Functionally, binds directly to 23S rRNA. The L1 stalk is quite mobile in the ribosome, and is involved in E site tRNA release. Protein L1 is also a translational repressor protein, it controls the translation of the L11 operon by binding to its mRNA. The sequence is that of Large ribosomal subunit protein uL1 from Anaeromyxobacter sp. (strain Fw109-5).